We begin with the raw amino-acid sequence, 454 residues long: Bifunctional protein GlmU (454 aa).

Residues 1 to 226 are pyrophosphorylase; the sequence is MALNVVILAA…AIEVEGANNR (226 aa). Residues 8-11, Lys22, Gln73, 78-79, 100-102, Gly137, Glu151, Asn166, and Asn224 contribute to the UDP-N-acetyl-alpha-D-glucosamine site; these read LAAG, GT, and YGD. Asp102 lines the Mg(2+) pocket. Asn224 provides a ligand contact to Mg(2+). Positions 227 to 247 are linker; sequence VQLAQLERAYQARAAEKLMLE. The segment at 248–454 is N-acetyltransferase; sequence GANLRDPARI…GWPRPVKLKK (207 aa). Residues Arg330 and Lys348 each contribute to the UDP-N-acetyl-alpha-D-glucosamine site. The active-site Proton acceptor is the His360. 2 residues coordinate UDP-N-acetyl-alpha-D-glucosamine: Tyr363 and Asn374. Residues Ala377, 383-384, Ser402, Ala420, and Arg437 each bind acetyl-CoA; that span reads NY.

It in the N-terminal section; belongs to the N-acetylglucosamine-1-phosphate uridyltransferase family. In the C-terminal section; belongs to the transferase hexapeptide repeat family. In terms of assembly, homotrimer. Mg(2+) serves as cofactor.

The protein localises to the cytoplasm. The catalysed reaction is alpha-D-glucosamine 1-phosphate + acetyl-CoA = N-acetyl-alpha-D-glucosamine 1-phosphate + CoA + H(+). It carries out the reaction N-acetyl-alpha-D-glucosamine 1-phosphate + UTP + H(+) = UDP-N-acetyl-alpha-D-glucosamine + diphosphate. The protein operates within nucleotide-sugar biosynthesis; UDP-N-acetyl-alpha-D-glucosamine biosynthesis; N-acetyl-alpha-D-glucosamine 1-phosphate from alpha-D-glucosamine 6-phosphate (route II): step 2/2. It functions in the pathway nucleotide-sugar biosynthesis; UDP-N-acetyl-alpha-D-glucosamine biosynthesis; UDP-N-acetyl-alpha-D-glucosamine from N-acetyl-alpha-D-glucosamine 1-phosphate: step 1/1. It participates in bacterial outer membrane biogenesis; LPS lipid A biosynthesis. Catalyzes the last two sequential reactions in the de novo biosynthetic pathway for UDP-N-acetylglucosamine (UDP-GlcNAc). The C-terminal domain catalyzes the transfer of acetyl group from acetyl coenzyme A to glucosamine-1-phosphate (GlcN-1-P) to produce N-acetylglucosamine-1-phosphate (GlcNAc-1-P), which is converted into UDP-GlcNAc by the transfer of uridine 5-monophosphate (from uridine 5-triphosphate), a reaction catalyzed by the N-terminal domain. The sequence is that of Bifunctional protein GlmU from Shewanella woodyi (strain ATCC 51908 / MS32).